We begin with the raw amino-acid sequence, 368 residues long: UDP-N-acetylglucosamine--N-acetylmuramyl-(pentapeptide) pyrophosphoryl-undecaprenol N-acetylglucosamine transferase (368 aa).

Residues 10–12, N126, S200, I255, and Q300 contribute to the UDP-N-acetyl-alpha-D-glucosamine site; that span reads TGG.

The protein belongs to the glycosyltransferase 28 family. MurG subfamily.

The protein localises to the cell membrane. The catalysed reaction is Mur2Ac(oyl-L-Ala-gamma-D-Glu-L-Lys-D-Ala-D-Ala)-di-trans,octa-cis-undecaprenyl diphosphate + UDP-N-acetyl-alpha-D-glucosamine = beta-D-GlcNAc-(1-&gt;4)-Mur2Ac(oyl-L-Ala-gamma-D-Glu-L-Lys-D-Ala-D-Ala)-di-trans,octa-cis-undecaprenyl diphosphate + UDP + H(+). It participates in cell wall biogenesis; peptidoglycan biosynthesis. In terms of biological role, cell wall formation. Catalyzes the transfer of a GlcNAc subunit on undecaprenyl-pyrophosphoryl-MurNAc-pentapeptide (lipid intermediate I) to form undecaprenyl-pyrophosphoryl-MurNAc-(pentapeptide)GlcNAc (lipid intermediate II). This is UDP-N-acetylglucosamine--N-acetylmuramyl-(pentapeptide) pyrophosphoryl-undecaprenol N-acetylglucosamine transferase from Lactobacillus helveticus (strain DPC 4571).